The primary structure comprises 184 residues: NADH-quinone oxidoreductase subunit B (184 aa).

The [4Fe-4S] cluster site is built by Cys37, Cys38, Cys103, and Cys132.

The protein belongs to the complex I 20 kDa subunit family. In terms of assembly, NDH-1 is composed of 14 different subunits. Subunits NuoB, C, D, E, F, and G constitute the peripheral sector of the complex. [4Fe-4S] cluster serves as cofactor.

The protein resides in the cell membrane. The catalysed reaction is a quinone + NADH + 5 H(+)(in) = a quinol + NAD(+) + 4 H(+)(out). In terms of biological role, NDH-1 shuttles electrons from NADH, via FMN and iron-sulfur (Fe-S) centers, to quinones in the respiratory chain. The immediate electron acceptor for the enzyme in this species is believed to be a menaquinone. Couples the redox reaction to proton translocation (for every two electrons transferred, four hydrogen ions are translocated across the cytoplasmic membrane), and thus conserves the redox energy in a proton gradient. The protein is NADH-quinone oxidoreductase subunit B of Rhodococcus jostii (strain RHA1).